The following is a 166-amino-acid chain: Probable chemoreceptor glutamine deamidase CheD (166 aa).

Belongs to the CheD family.

The enzyme catalyses L-glutaminyl-[protein] + H2O = L-glutamyl-[protein] + NH4(+). Its function is as follows. Probably deamidates glutamine residues to glutamate on methyl-accepting chemotaxis receptors (MCPs), playing an important role in chemotaxis. The protein is Probable chemoreceptor glutamine deamidase CheD of Clostridium acetobutylicum (strain ATCC 824 / DSM 792 / JCM 1419 / IAM 19013 / LMG 5710 / NBRC 13948 / NRRL B-527 / VKM B-1787 / 2291 / W).